The sequence spans 245 residues: Bis(5'-nucleosyl)-tetraphosphatase PrpE [asymmetrical] (245 aa).

It belongs to the PrpE family. Ni(2+) serves as cofactor.

It carries out the reaction P(1),P(4)-bis(5'-guanosyl) tetraphosphate + H2O = GMP + GTP + 2 H(+). In terms of biological role, asymmetrically hydrolyzes Ap4p to yield AMP and ATP. This chain is Bis(5'-nucleosyl)-tetraphosphatase PrpE [asymmetrical], found in Anoxybacillus flavithermus (strain DSM 21510 / WK1).